Here is a 170-residue protein sequence, read N- to C-terminus: UPF0161 protein At3g09310 (170 aa).

Disordered regions lie at residues 49 to 70 (CLSA…GEEL) and 147 to 170 (SGIK…QRKI). Residues 154-170 (GDEEEEDNYDDEDQRKI) show a composition bias toward acidic residues.

Belongs to the UPF0161 family.

The protein is UPF0161 protein At3g09310 of Arabidopsis thaliana (Mouse-ear cress).